The following is a 79-amino-acid chain: Acyl carrier protein (79 aa).

In terms of domain architecture, Carrier spans 2–77 (ENIEQRVKKI…QAIDYVNAHL (76 aa)). Ser37 bears the O-(pantetheine 4'-phosphoryl)serine mark.

The protein belongs to the acyl carrier protein (ACP) family. In terms of processing, 4'-phosphopantetheine is transferred from CoA to a specific serine of apo-ACP by AcpS. This modification is essential for activity because fatty acids are bound in thioester linkage to the sulfhydryl of the prosthetic group.

The protein localises to the cytoplasm. It participates in lipid metabolism; fatty acid biosynthesis. Functionally, carrier of the growing fatty acid chain in fatty acid biosynthesis. This chain is Acyl carrier protein, found in Azoarcus sp. (strain BH72).